The following is a 255-amino-acid chain: 4-hydroxy-tetrahydrodipicolinate reductase (255 aa).

NAD(+)-binding positions include 13-18, 90-92, and 114-117; these read GCNGKM, CTT, and SANM. Histidine 147 (proton donor/acceptor) is an active-site residue. Histidine 148 contributes to the (S)-2,3,4,5-tetrahydrodipicolinate binding site. The active-site Proton donor is lysine 151. 157–158 is a (S)-2,3,4,5-tetrahydrodipicolinate binding site; that stretch reads GT.

It belongs to the DapB family.

It localises to the cytoplasm. It carries out the reaction (S)-2,3,4,5-tetrahydrodipicolinate + NAD(+) + H2O = (2S,4S)-4-hydroxy-2,3,4,5-tetrahydrodipicolinate + NADH + H(+). The catalysed reaction is (S)-2,3,4,5-tetrahydrodipicolinate + NADP(+) + H2O = (2S,4S)-4-hydroxy-2,3,4,5-tetrahydrodipicolinate + NADPH + H(+). The protein operates within amino-acid biosynthesis; L-lysine biosynthesis via DAP pathway; (S)-tetrahydrodipicolinate from L-aspartate: step 4/4. Catalyzes the conversion of 4-hydroxy-tetrahydrodipicolinate (HTPA) to tetrahydrodipicolinate. The protein is 4-hydroxy-tetrahydrodipicolinate reductase of Clostridium tetani (strain Massachusetts / E88).